The following is a 272-amino-acid chain: Probable proteasome subunit beta type-5 (272 aa).

A propeptide spans 1–61 (removed in mature form); that stretch reads MNSIVSKYTQ…KHCLIKMNHG (61 aa). Residue T62 is the Nucleophile of the active site.

The protein belongs to the peptidase T1B family. In terms of assembly, the 26S proteasome consists of a 20S proteasome core and two 19S regulatory subunits. The 20S proteasome core is composed of 28 subunits that are arranged in four stacked rings, resulting in a barrel-shaped structure. The two end rings are each formed by seven alpha subunits, and the two central rings are each formed by seven beta subunits. The catalytic chamber with the active sites is on the inside of the barrel.

The protein localises to the cytoplasm. It localises to the nucleus. It catalyses the reaction Cleavage of peptide bonds with very broad specificity.. Functionally, the proteasome is a multicatalytic proteinase complex which is characterized by its ability to cleave peptides with Arg, Phe, Tyr, Leu, and Glu adjacent to the leaving group at neutral or slightly basic pH. The proteasome has an ATP-dependent proteolytic activity. The sequence is that of Probable proteasome subunit beta type-5 (pts1) from Schizosaccharomyces pombe (strain 972 / ATCC 24843) (Fission yeast).